Reading from the N-terminus, the 180-residue chain is Chromosome-anchoring protein RacA (180 aa).

Positions 5-25 form a DNA-binding region, H-T-H motif; that stretch reads TPFIAKKLGVSPKAVVRIAQQ. Positions 90 to 150 form a coiled coil; the sequence is HDFEQLAAQL…KLEAGLKKEE (61 aa).

The protein belongs to the RacA family.

It is found in the cytoplasm. Its function is as follows. Required for the formation of axial filaments and for anchoring the origin regions at the cell poles in sporulating cells, thus ensuring proper chromosome segregation in the prespore. Binds in a dispersed manner throughout the chromosome but preferentially to sites clustered in the origin portion of the chromosome, causing condensation of the chromosome and its remodeling into an elongated, anchored structure. The polypeptide is Chromosome-anchoring protein RacA (Bacillus anthracis (strain A0248)).